A 1169-amino-acid polypeptide reads, in one-letter code: DNA repair protein RAD5 (1169 aa).

At Ser2 the chain carries N-acetylserine. Phosphoserine is present on residues Ser20, Ser23, Ser129, and Ser130. A compositionally biased stretch (basic and acidic residues) spans 302 to 317 (MKRRRTEGGNKREKDN). The tract at residues 302-327 (MKRRRTEGGNKREKDNGNFGRTLTET) is disordered. The Helicase ATP-binding domain occupies 519–730 (PILKTMIKGG…YSLVKFLELD (212 aa)). Position 532 to 539 (532 to 539 (DEMGLGKT)) interacts with ATP. Residues 681–684 (DEGH) carry the DEGH box motif. An RING-type zinc finger spans residues 914–961 (CSICTTEPMDLDKALFTECGHSFCEKCLFEYIEFQNSKNLGLKCPNCR). In terms of domain architecture, Helicase C-terminal spans 995–1165 (KITALLKELQ…RRKRRIEEIQ (171 aa)).

It belongs to the SNF2/RAD54 helicase family. As to quaternary structure, homodimer. Interacts with POL30, RAD18, UBC9 and UBC13. Mg(2+) serves as cofactor. Requires Mn(2+) as cofactor. It depends on Ca(2+) as a cofactor.

The protein localises to the cytoplasm. The protein resides in the nucleus. Its function is as follows. Probable helicase, member of the UBC2/RAD6 epistasis group. Functions with the DNA repair protein RAD18 in error-free postreplication DNA repair. Involved in the maintenance of wild-type rates of instability of simple repetitive sequences such as poly(GT) repeats. Seems to be involved in maintaining a balance which acts in favor of error-prone non-homologous joining during DNA double-strand breaks repairs. Recruits the UBC13-MMS2 dimer to chromatin for DNA repair. This is DNA repair protein RAD5 (RAD5) from Saccharomyces cerevisiae (strain ATCC 204508 / S288c) (Baker's yeast).